The following is a 401-amino-acid chain: Enoyl-[acyl-carrier-protein] reductase [NADH] (401 aa).

Residues 48 to 53 (GASSGY), 74 to 75 (FE), 111 to 112 (DA), and 140 to 141 (LA) contribute to the NAD(+) site. Position 226 (tyrosine 226) interacts with substrate. Tyrosine 236 acts as the Proton donor in catalysis. Residues lysine 245 and 274–276 (VVT) contribute to the NAD(+) site.

It belongs to the TER reductase family. Monomer.

The enzyme catalyses a 2,3-saturated acyl-[ACP] + NAD(+) = a (2E)-enoyl-[ACP] + NADH + H(+). It functions in the pathway lipid metabolism; fatty acid biosynthesis. Involved in the final reduction of the elongation cycle of fatty acid synthesis (FAS II). Catalyzes the reduction of a carbon-carbon double bond in an enoyl moiety that is covalently linked to an acyl carrier protein (ACP). This chain is Enoyl-[acyl-carrier-protein] reductase [NADH], found in Xylella fastidiosa (strain 9a5c).